A 623-amino-acid chain; its full sequence is MEIVYVYLKKRSEFGKQCNFSDRQAELNIDILPNPELAALYVERNPVDTGIQCSASMSEHEANTERFEMESCGVNHVEGGWPKDVNPQELEQTIRFRKKVEKDENYINAVMQLGSIMEHCIKQNNAIDIYEEYFDDEEAVEVTEEAPSAKTINVFRDPQEIKRTATHLSWHPDGNRKLAVAYSCLKFQRAPMSMNYDSYIWDLENPNRPEIALKPLSPLVTLEYNPKDSHVLLGGCYNGQIACWDTRKGSLVAELSTIEFSHRDPVYGTIWLQSKTGTECFSASTDGQVMWWDIRKISEPIEVVIMDISRKEQLENALGAISLEFESTLPTKFMVGTEQGIVISCNRKAKTQAEKIVCTFYGHHGPIYALQRNPFYPKNFLTVGDWTARIWSEDSRESSIMWTKYHMAYLSDGAWSPVRPAVFFTTKMDGTLDIWDLVFKQCDPALSLKVCDDPLFCLRVQDNGCLIACGSELGTTTLLEVSSSLSTLQRNEKNIASSIFERETRREKILEARHREMRLKEKGKVEGKEDDQKEEEAALDLDELVGKAEEEFFEVIFSELKRKEAEALKKKPKPRKKSSVKVEAEEEVEENVGEEEEAGGIIGIDAVEDMSEEAGEEQEDVPT.

WD repeat units follow at residues 214 to 254 (KPLS…LVAE), 261 to 302 (SHRD…EPIE), 362 to 401 (GHHGPIYALQRNPFYPKNFLTVGDWTARIWSEDSRESSIM), 405 to 445 (YHMA…CDPA), and 450 to 489 (VCDDPLFCLRVQDNGCLIACGSELGTTTLLEVSSSLSTLQ). The interval 565-602 (AEALKKKPKPRKKSSVKVEAEEEVEENVGEEEEAGGII) is disordered. The span at 570–579 (KKPKPRKKSS) shows a compositional bias: basic residues. Acidic residues predominate over residues 584-598 (AEEEVEENVGEEEEA).

The protein belongs to the dynein intermediate chain family. In terms of assembly, consists of at least two heavy chains and a number of intermediate and light chains. Interacts with DNAAF2. Interacts with DNAAF6/PIH1D3. Interacts with HEATR2; probably involved in outer arm dynein assembly. Interacts with CFAP53. As to expression, predominantly expressed in ovary, testis and lung.

Its subcellular location is the cytoplasm. It localises to the cytoskeleton. The protein localises to the cilium axoneme. It is found in the dynein axonemal particle. In terms of biological role, part of the dynein complex of respiratory cilia. The chain is Dynein axonemal intermediate chain 2 (Dnai2) from Mus musculus (Mouse).